The following is a 367-amino-acid chain: Peptidyl-prolyl cis-trans isomerase D (367 aa).

Residues 7 to 171 form the PPIase cyclophilin-type domain; sequence FFEVAIGGKT…QPVTIVDCGE (165 aa). TPR repeat units follow at residues 213–246, 264–297, and 302–335; these read IEKL…LEDY, ISCY…ETVA, and AKAL…EPAD.

It belongs to the cyclophilin-type PPIase family. PPIase D subfamily.

The protein resides in the cytoplasm. It catalyses the reaction [protein]-peptidylproline (omega=180) = [protein]-peptidylproline (omega=0). In terms of biological role, PPIases accelerate the folding of proteins. It catalyzes the cis-trans isomerization of proline imidic peptide bonds in oligopeptides. The polypeptide is Peptidyl-prolyl cis-trans isomerase D (CPR6) (Yarrowia lipolytica (strain CLIB 122 / E 150) (Yeast)).